A 1014-amino-acid chain; its full sequence is Endogenous retrovirus group K member 10 Pol protein (1014 aa).

A Reverse transcriptase domain is found at 57 to 245; sequence LEKGHIEPSF…TPFHYLGMQI (189 aa). The LPQG signature appears at 161–164; the sequence is LPQG. The YXDD signature appears at 195–198; that stretch reads YIDD. The RNase H type-1 domain maps to 460 to 590; that stretch reads LENALTVFTD…ADLLVSSALI (131 aa). Residues Asp-469, Glu-497, Asp-517, and Asp-582 each contribute to the Mg(2+) site. An Integrase-type zinc finger spans residues 587-628; sequence SALIKAQELHALTHVNAAGLKNKFDVTWKQAKDIVQHCTQCQ. 4 residues coordinate Zn(2+): His-596, His-600, Cys-624, and Cys-627. Residues 642–803 form the Integrase catalytic domain; the sequence is RGLCPNALWQ…TSAEQHLTGK (162 aa). Residues 811–859 constitute a DNA-binding region (integrase-type); the sequence is KLIWWKDNKNKTWEIGKVITWGRGFACVSPGENQLPVWLPTRHLKFYNE.

The protein belongs to the beta type-B retroviral polymerase family. HERV class-II K(HML-2) pol subfamily.

The enzyme catalyses DNA(n) + a 2'-deoxyribonucleoside 5'-triphosphate = DNA(n+1) + diphosphate. The catalysed reaction is Endonucleolytic cleavage to 5'-phosphomonoester.. Early post-infection, the reverse transcriptase converts the viral RNA genome into double-stranded viral DNA. The RNase H domain of the reverse transcriptase performs two functions. It degrades the RNA template and specifically removes the RNA primer from the RNA/DNA hybrid. Following nuclear import, the integrase catalyzes the insertion of the linear, double-stranded viral DNA into the host cell chromosome. Endogenous Pol proteins may have kept, lost or modified their original function during evolution. The sequence is that of Endogenous retrovirus group K member 10 Pol protein (ERVK-10) from Homo sapiens (Human).